The chain runs to 485 residues: Adenosylhomocysteinase 2 (485 aa).

Threonine 64, aspartate 139, and glutamate 205 together coordinate substrate. 206 to 208 (TTT) is an NAD(+) binding site. Positions 235 and 239 each coordinate substrate. Residues asparagine 240, 269-274 (GYGDVG), glutamate 292, asparagine 327, 348-350 (IGH), and asparagine 397 contribute to the NAD(+) site.

This sequence belongs to the adenosylhomocysteinase family. NAD(+) is required as a cofactor.

It catalyses the reaction S-adenosyl-L-homocysteine + H2O = L-homocysteine + adenosine. It functions in the pathway amino-acid biosynthesis; L-homocysteine biosynthesis; L-homocysteine from S-adenosyl-L-homocysteine: step 1/1. In terms of biological role, adenosylhomocysteine is a competitive inhibitor of S-adenosyl-L-methionine-dependent methyl transferase reactions; therefore adenosylhomocysteinase may play a key role in the control of methylations via regulation of the intracellular concentration of adenosylhomocysteine. The polypeptide is Adenosylhomocysteinase 2 (SAHH2) (Arabidopsis thaliana (Mouse-ear cress)).